The sequence spans 65 residues: Large ribosomal subunit protein bL35 (65 aa).

This sequence belongs to the bacterial ribosomal protein bL35 family.

This Synechococcus sp. (strain CC9311) protein is Large ribosomal subunit protein bL35.